A 150-amino-acid chain; its full sequence is Photosystem I reaction center subunit XI (150 aa).

Topologically, residues methionine 1–aspartate 72 are stromal. A helical transmembrane segment spans residues valine 73–leucine 93. Topologically, residues serine 94–glutamine 118 are lumenal. Residues phenylalanine 119–alanine 139 form a helical membrane-spanning segment. The Stromal segment spans residues asparagine 140 to serine 150.

The protein belongs to the PsaL family.

The protein resides in the plastid. It is found in the chloroplast thylakoid membrane. This is Photosystem I reaction center subunit XI from Gracilaria tenuistipitata var. liui (Red alga).